Reading from the N-terminus, the 151-residue chain is 3-dehydroquinate dehydratase (151 aa).

The active-site Proton acceptor is the Tyr-24. Substrate contacts are provided by Asn-76, His-82, and Asp-89. His-102 serves as the catalytic Proton donor. Residues 103–104 and Arg-113 each bind substrate; that span reads VS.

It belongs to the type-II 3-dehydroquinase family. In terms of assembly, homododecamer.

It catalyses the reaction 3-dehydroquinate = 3-dehydroshikimate + H2O. It functions in the pathway metabolic intermediate biosynthesis; chorismate biosynthesis; chorismate from D-erythrose 4-phosphate and phosphoenolpyruvate: step 3/7. Functionally, catalyzes a trans-dehydration via an enolate intermediate. The sequence is that of 3-dehydroquinate dehydratase from Rhodopseudomonas palustris (strain HaA2).